Reading from the N-terminus, the 205-residue chain is MDVLQKLKNNQRRIGLTGGIASGKSTITNYIRKHKNIPILDADNLSRELIKPNTYGYKKILDYFGNQIIDTKNNSEKAINRKLLRNIIFKHSESKEWIDNLLHPLVKEKMIEECIQYKNNQTIVLVIPLLFEAKFEDICTEIWLVKCPRELQKKRLITRDKISEKEAYETINLQLSFEEKSKFSDIILDNSDDQNKWINTIREIL.

Residues 13 to 205 form the DPCK domain; sequence RIGLTGGIAS…KWINTIREIL (193 aa). Residue 21 to 26 coordinates ATP; sequence ASGKST.

This sequence belongs to the CoaE family.

The protein resides in the cytoplasm. It carries out the reaction 3'-dephospho-CoA + ATP = ADP + CoA + H(+). The protein operates within cofactor biosynthesis; coenzyme A biosynthesis; CoA from (R)-pantothenate: step 5/5. Functionally, catalyzes the phosphorylation of the 3'-hydroxyl group of dephosphocoenzyme A to form coenzyme A. This Prochlorococcus marinus (strain MIT 9312) protein is Dephospho-CoA kinase.